An 83-amino-acid polypeptide reads, in one-letter code: Three-finger toxin MALT0066C (83 aa).

The signal sequence occupies residues 1-21 (MKTLLLTLVVVTIVCLDFGHT). Cystine bridges form between Cys-24-Cys-45, Cys-38-Cys-62, Cys-64-Cys-75, and Cys-76-Cys-81.

Belongs to the three-finger toxin family. Short-chain subfamily. Type I alpha-neurotoxin sub-subfamily. In terms of assembly, dimer. Expressed by the venom gland.

It localises to the secreted. Its function is as follows. Binds to muscle nicotinic acetylcholine receptor (nAChR) and inhibit acetylcholine from binding to the receptor, thereby impairing neuromuscular transmission. This Micrurus altirostris (Uruguayan coral snake) protein is Three-finger toxin MALT0066C.